The chain runs to 131 residues: Holin-like protein CidA (131 aa).

The next 4 membrane-spanning stretches (helical) occupy residues 4–24 (VQLI…TYIG), 30–50 (IFHL…LLLQ), 65–85 (FLLK…MDVA), and 88–108 (ITLN…IVAL).

Belongs to the CidA/LrgA family. CidA subfamily.

It localises to the cell membrane. In terms of biological role, increases the activity of extracellular murein hydrolases possibly by mediating their export via hole formation. Inhibited by the antiholin-like proteins LrgAB. In an unstressed cell, the LrgAB products probably inhibit the function of the CidAB proteins. When a cell is stressed by the addition of antibiotics or by other factors in the environment, the CidAB proteins possibly oligomerize within the bacterial cell membrane, creating lesions that disrupt the proton motive force, which in turn results in loss of cell viability. These lesions are also hypothesized to regulate the subsequent cell lysis by either allowing the murein hydrolases access to the cell wall substrate and/or regulating their activity by a possible change in the cell wall pH that results from loss of membrane potential. The sequence is that of Holin-like protein CidA from Staphylococcus aureus (strain Mu3 / ATCC 700698).